A 44-amino-acid polypeptide reads, in one-letter code: Cytochrome b559 subunit beta (44 aa).

The chain crosses the membrane as a helical span at residues 19–35 (WVSIHALAVPTIFFLGS). Residue His23 participates in heme binding.

The protein belongs to the PsbE/PsbF family. As to quaternary structure, heterodimer of an alpha subunit and a beta subunit. PSII is composed of 1 copy each of membrane proteins PsbA, PsbB, PsbC, PsbD, PsbE, PsbF, PsbH, PsbI, PsbJ, PsbK, PsbL, PsbM, PsbT, PsbX, PsbY, PsbZ, Psb30/Ycf12, at least 3 peripheral proteins of the oxygen-evolving complex and a large number of cofactors. It forms dimeric complexes. Heme b serves as cofactor.

The protein localises to the plastid. It localises to the chloroplast thylakoid membrane. This b-type cytochrome is tightly associated with the reaction center of photosystem II (PSII). PSII is a light-driven water:plastoquinone oxidoreductase that uses light energy to abstract electrons from H(2)O, generating O(2) and a proton gradient subsequently used for ATP formation. It consists of a core antenna complex that captures photons, and an electron transfer chain that converts photonic excitation into a charge separation. This is Cytochrome b559 subunit beta from Chlamydomonas moewusii (Chlamydomonas eugametos).